The sequence spans 180 residues: Shikimate kinase (180 aa).

Residue 19 to 24 (GAGKTT) participates in ATP binding. T23 provides a ligand contact to Mg(2+). Positions 41, 65, and 87 each coordinate substrate. R125 is an ATP binding site. A substrate-binding site is contributed by R144.

This sequence belongs to the shikimate kinase family. As to quaternary structure, monomer. Requires Mg(2+) as cofactor.

Its subcellular location is the cytoplasm. The catalysed reaction is shikimate + ATP = 3-phosphoshikimate + ADP + H(+). It participates in metabolic intermediate biosynthesis; chorismate biosynthesis; chorismate from D-erythrose 4-phosphate and phosphoenolpyruvate: step 5/7. In terms of biological role, catalyzes the specific phosphorylation of the 3-hydroxyl group of shikimic acid using ATP as a cosubstrate. The sequence is that of Shikimate kinase from Acinetobacter baylyi (strain ATCC 33305 / BD413 / ADP1).